The primary structure comprises 607 residues: Phosphomethylpyrimidine synthase (607 aa).

Substrate is bound by residues asparagine 216, methionine 245, tyrosine 274, histidine 310, 330–332, 371–374, and glutamate 410; these read SRG and DGLR. A Zn(2+)-binding site is contributed by histidine 414. Substrate is bound at residue tyrosine 437. Residue histidine 478 participates in Zn(2+) binding. The [4Fe-4S] cluster site is built by cysteine 558, cysteine 561, and cysteine 566.

It belongs to the ThiC family. Homodimer. The cofactor is [4Fe-4S] cluster.

The catalysed reaction is 5-amino-1-(5-phospho-beta-D-ribosyl)imidazole + S-adenosyl-L-methionine = 4-amino-2-methyl-5-(phosphooxymethyl)pyrimidine + CO + 5'-deoxyadenosine + formate + L-methionine + 3 H(+). The protein operates within cofactor biosynthesis; thiamine diphosphate biosynthesis. Its function is as follows. Catalyzes the synthesis of the hydroxymethylpyrimidine phosphate (HMP-P) moiety of thiamine from aminoimidazole ribotide (AIR) in a radical S-adenosyl-L-methionine (SAM)-dependent reaction. This is Phosphomethylpyrimidine synthase from Agrobacterium fabrum (strain C58 / ATCC 33970) (Agrobacterium tumefaciens (strain C58)).